A 125-amino-acid chain; its full sequence is Large ribosomal subunit protein bL20 (125 aa).

It belongs to the bacterial ribosomal protein bL20 family.

Its function is as follows. Binds directly to 23S ribosomal RNA and is necessary for the in vitro assembly process of the 50S ribosomal subunit. It is not involved in the protein synthesizing functions of that subunit. This Methylobacterium radiotolerans (strain ATCC 27329 / DSM 1819 / JCM 2831 / NBRC 15690 / NCIMB 10815 / 0-1) protein is Large ribosomal subunit protein bL20.